Consider the following 370-residue polypeptide: tRNA-specific 2-thiouridylase MnmA (370 aa).

ATP contacts are provided by residues 9 to 16 (GMSGGVDS) and Met35. The tract at residues 95-97 (NPD) is interaction with target base in tRNA. Catalysis depends on Cys100, which acts as the Nucleophile. Cysteines 100 and 196 form a disulfide. ATP is bound at residue Gly124. The interval 146–148 (KDQ) is interaction with tRNA. Residue Cys196 is the Cysteine persulfide intermediate of the active site. The interaction with tRNA stretch occupies residues 308 to 309 (RY).

Belongs to the MnmA/TRMU family.

Its subcellular location is the cytoplasm. It catalyses the reaction S-sulfanyl-L-cysteinyl-[protein] + uridine(34) in tRNA + AH2 + ATP = 2-thiouridine(34) in tRNA + L-cysteinyl-[protein] + A + AMP + diphosphate + H(+). Catalyzes the 2-thiolation of uridine at the wobble position (U34) of tRNA, leading to the formation of s(2)U34. The sequence is that of tRNA-specific 2-thiouridylase MnmA from Ralstonia nicotianae (strain ATCC BAA-1114 / GMI1000) (Ralstonia solanacearum).